The sequence spans 166 residues: Glutamyl-tRNA(Gln) amidotransferase subunit C, mitochondrial (166 aa).

Residues 1-44 (MIRGWTIFTLCKPSALVGSSHFNKQFNWAKSQLQFATKVPQQPY) constitute a mitochondrion transit peptide.

This sequence belongs to the GatC family. Subunit of the heterotrimeric GatCAB amidotransferase (AdT) complex, composed of A, B and C subunits.

It is found in the mitochondrion. It carries out the reaction L-glutamyl-tRNA(Gln) + L-glutamine + ATP + H2O = L-glutaminyl-tRNA(Gln) + L-glutamate + ADP + phosphate + H(+). Functionally, allows the formation of correctly charged Gln-tRNA(Gln) through the transamidation of misacylated Glu-tRNA(Gln) in the mitochondria. The reaction takes place in the presence of glutamine and ATP through an activated gamma-phospho-Glu-tRNA(Gln). In Anopheles darlingi (Mosquito), this protein is Glutamyl-tRNA(Gln) amidotransferase subunit C, mitochondrial.